A 161-amino-acid polypeptide reads, in one-letter code: Regulator of ribonuclease activity A (161 aa).

Belongs to the RraA family. As to quaternary structure, homotrimer. Binds to both RNA-binding sites in the C-terminal region of Rne and to RhlB.

The protein localises to the cytoplasm. Functionally, globally modulates RNA abundance by binding to RNase E (Rne) and regulating its endonucleolytic activity. Can modulate Rne action in a substrate-dependent manner by altering the composition of the degradosome. Modulates RNA-binding and helicase activities of the degradosome. This Salmonella choleraesuis (strain SC-B67) protein is Regulator of ribonuclease activity A.